The following is a 541-amino-acid chain: Zinc finger protein 329 (541 aa).

At serine 50 the chain carries Phosphoserine. 12 C2H2-type zinc fingers span residues tyrosine 203–histidine 225, tyrosine 231–histidine 253, tyrosine 259–histidine 281, tyrosine 287–histidine 309, tyrosine 315–histidine 337, tyrosine 343–histidine 365, phenylalanine 371–histidine 393, tyrosine 399–histidine 421, tyrosine 427–histidine 449, tyrosine 455–histidine 477, tyrosine 483–histidine 505, and serine 511–histidine 533.

It belongs to the krueppel C2H2-type zinc-finger protein family.

It localises to the nucleus. Its function is as follows. May be involved in transcriptional regulation. This Homo sapiens (Human) protein is Zinc finger protein 329 (ZNF329).